A 144-amino-acid chain; its full sequence is Transcriptional regulator SlyA (144 aa).

The HTH marR-type domain maps to 2–135 (ESPLGSDLAR…LSNMIAKLEK (134 aa)). Residues 49–72 (QIQLAKAIGIEQPSLVRTLDQLEE) constitute a DNA-binding region (H-T-H motif).

It belongs to the SlyA family. Homodimer.

Its function is as follows. Transcription regulator that can specifically activate or repress expression of target genes. The sequence is that of Transcriptional regulator SlyA from Sodalis glossinidius (strain morsitans).